A 180-amino-acid polypeptide reads, in one-letter code: ATP synthase subunit delta (180 aa).

Belongs to the ATPase delta chain family. F-type ATPases have 2 components, F(1) - the catalytic core - and F(0) - the membrane proton channel. F(1) has five subunits: alpha(3), beta(3), gamma(1), delta(1), epsilon(1). F(0) has three main subunits: a(1), b(2) and c(10-14). The alpha and beta chains form an alternating ring which encloses part of the gamma chain. F(1) is attached to F(0) by a central stalk formed by the gamma and epsilon chains, while a peripheral stalk is formed by the delta and b chains.

The protein localises to the cell membrane. Functionally, f(1)F(0) ATP synthase produces ATP from ADP in the presence of a proton or sodium gradient. F-type ATPases consist of two structural domains, F(1) containing the extramembraneous catalytic core and F(0) containing the membrane proton channel, linked together by a central stalk and a peripheral stalk. During catalysis, ATP synthesis in the catalytic domain of F(1) is coupled via a rotary mechanism of the central stalk subunits to proton translocation. This protein is part of the stalk that links CF(0) to CF(1). It either transmits conformational changes from CF(0) to CF(1) or is implicated in proton conduction. The sequence is that of ATP synthase subunit delta from Leuconostoc mesenteroides subsp. mesenteroides (strain ATCC 8293 / DSM 20343 / BCRC 11652 / CCM 1803 / JCM 6124 / NCDO 523 / NBRC 100496 / NCIMB 8023 / NCTC 12954 / NRRL B-1118 / 37Y).